A 699-amino-acid polypeptide reads, in one-letter code: Elongation factor G (699 aa).

A tr-type G domain is found at 8-283; the sequence is EHIRNIGICA…AIVDFLPSPI (276 aa). GTP-binding positions include 17 to 24, 81 to 85, and 135 to 138; these read AHIDAGKT, DTPGH, and NKMD.

Belongs to the TRAFAC class translation factor GTPase superfamily. Classic translation factor GTPase family. EF-G/EF-2 subfamily.

It is found in the cytoplasm. In terms of biological role, catalyzes the GTP-dependent ribosomal translocation step during translation elongation. During this step, the ribosome changes from the pre-translocational (PRE) to the post-translocational (POST) state as the newly formed A-site-bound peptidyl-tRNA and P-site-bound deacylated tRNA move to the P and E sites, respectively. Catalyzes the coordinated movement of the two tRNA molecules, the mRNA and conformational changes in the ribosome. This Rickettsia typhi (strain ATCC VR-144 / Wilmington) protein is Elongation factor G.